The chain runs to 221 residues: Protein N-terminal glutamine amidohydrolase (221 aa).

S2 is modified (N-acetylserine). Residues C23, H79, and D97 contribute to the active site.

Belongs to the NTAQ1 family. Monomer.

It carries out the reaction N-terminal L-glutaminyl-[protein] + H2O = N-terminal L-glutamyl-[protein] + NH4(+). Functionally, mediates the side-chain deamidation of N-terminal glutamine residues to glutamate, an important step in N-end rule pathway of protein degradation. Conversion of the resulting N-terminal glutamine to glutamate renders the protein susceptible to arginylation, polyubiquitination and degradation as specified by the N-end rule. Does not act on substrates with internal or C-terminal glutamine and does not act on non-glutamine residues in any position. Involved in immune response. Controls the expression of specific defense-response genes, activates the synthesis pathway for the phytoalexin camalexin, and influences basal resistance to the hemibiotroph pathogen Pseudomonas syringae pv tomato (Pst). This chain is Protein N-terminal glutamine amidohydrolase, found in Arabidopsis thaliana (Mouse-ear cress).